The following is a 157-amino-acid chain: S-ribosylhomocysteine lyase (157 aa).

3 residues coordinate Fe cation: H54, H58, and C124.

It belongs to the LuxS family. As to quaternary structure, homodimer. Fe cation serves as cofactor.

The enzyme catalyses S-(5-deoxy-D-ribos-5-yl)-L-homocysteine = (S)-4,5-dihydroxypentane-2,3-dione + L-homocysteine. In terms of biological role, involved in the synthesis of autoinducer 2 (AI-2) which is secreted by bacteria and is used to communicate both the cell density and the metabolic potential of the environment. The regulation of gene expression in response to changes in cell density is called quorum sensing. Catalyzes the transformation of S-ribosylhomocysteine (RHC) to homocysteine (HC) and 4,5-dihydroxy-2,3-pentadione (DPD). The sequence is that of S-ribosylhomocysteine lyase from Lactobacillus acidophilus (strain ATCC 700396 / NCK56 / N2 / NCFM).